A 194-amino-acid chain; its full sequence is Peptide deformylase (194 aa).

The Fe cation site is built by cysteine 105 and histidine 147. Glutamate 148 is an active-site residue. Residue histidine 151 coordinates Fe cation.

Belongs to the polypeptide deformylase family. Fe(2+) is required as a cofactor.

It carries out the reaction N-terminal N-formyl-L-methionyl-[peptide] + H2O = N-terminal L-methionyl-[peptide] + formate. In terms of biological role, removes the formyl group from the N-terminal Met of newly synthesized proteins. Requires at least a dipeptide for an efficient rate of reaction. N-terminal L-methionine is a prerequisite for activity but the enzyme has broad specificity at other positions. This is Peptide deformylase from Flavobacterium psychrophilum (strain ATCC 49511 / DSM 21280 / CIP 103535 / JIP02/86).